The following is a 191-amino-acid chain: UPF0149 protein VCM66_2399 (191 aa).

This sequence belongs to the UPF0149 family.

The chain is UPF0149 protein VCM66_2399 from Vibrio cholerae serotype O1 (strain M66-2).